The sequence spans 414 residues: Glutathione gamma-glutamylcysteinyltransferase (414 aa).

In terms of domain architecture, Peptidase C83 spans 37–256 (QLKKSFYKRQ…GYVLLEPMHI (220 aa)).

It belongs to the phytochelatin synthase family.

It catalyses the reaction [Glu(-Cys)](n)-Gly + glutathione + H(+) = [Glu(-Cys)](n+1)-Gly + glycine. In terms of biological role, required for detoxification of heavy metals such as cadmium and arsenate. The sequence is that of Glutathione gamma-glutamylcysteinyltransferase from Schizosaccharomyces pombe (strain 972 / ATCC 24843) (Fission yeast).